The chain runs to 109 residues: Nucleoid-associated protein MS1507 (109 aa).

The interval 1-21 is disordered; sequence MFGKGGLGNLMKQAQQMQERM.

This sequence belongs to the YbaB/EbfC family. Homodimer.

The protein resides in the cytoplasm. It localises to the nucleoid. Binds to DNA and alters its conformation. May be involved in regulation of gene expression, nucleoid organization and DNA protection. The chain is Nucleoid-associated protein MS1507 from Mannheimia succiniciproducens (strain KCTC 0769BP / MBEL55E).